The sequence spans 264 residues: Gap junction beta-1 protein (264 aa).

Topologically, residues 1–22 (MNWAGLYAILSGVNRHSTSIGR) are cytoplasmic. A helical membrane pass occupies residues 23–45 (IWLSVVFIFRIMVLVAAAESVWG). The Extracellular segment spans residues 46–75 (DEKSAFTCNTQQPGCNSVCYDHFFPISHIR). A helical membrane pass occupies residues 76-98 (LWALQLIIVSTPALLVAMHVAHL). The Cytoplasmic portion of the chain corresponds to 99–130 (QHQEKKELRLSRHVKDQELAEVKKHKVKISGT). A helical transmembrane segment spans residues 131-153 (LWWTYISSVFFRIIFEAAFMYIF). The Extracellular segment spans residues 154-191 (YLIYPGYSMIRLLKCDAYPCPNTVDCFVSRPTEKTIFT). A helical transmembrane segment spans residues 192–214 (VFMLVASGVCIVLNVAEVFFLIA). At 215–264 (QACTRRARRHRDSGSISKEHQQNEMNLLITGGSIIKRSAGQEKGDHCSTS) the chain is on the cytoplasmic side.

Belongs to the connexin family. Beta-type (group I) subfamily. As to quaternary structure, a connexon is composed of a hexamer of connexins. In terms of tissue distribution, lung, liver, intestines, stomach and kidney.

Its subcellular location is the cell membrane. It is found in the cell junction. It localises to the gap junction. Functionally, one gap junction consists of a cluster of closely packed pairs of transmembrane channels, the connexons, through which materials of low MW diffuse from one cell to a neighboring cell. The protein is Gap junction beta-1 protein (gjb1) of Xenopus laevis (African clawed frog).